A 187-amino-acid chain; its full sequence is MKVTFITGNKHKLSEAEKIFHDTGIELEHADLGYPELQGTLEEVARYGAEHAARIMDGPVIVEDAGLFIRALKWFPGPYSAYVQDTIGNRGILKLMENVEDRYAEFRSAVGFCAPKSEPEVFLGVVKGRIGTEERGTRGFAFDPLFYPEGMDRSFGELSTIEKNRFSHRSRALKKFAQWYTENYEVI.

7–12 (TGNKHK) serves as a coordination point for substrate. Residues Glu-36 and Asp-64 each contribute to the Mg(2+) site. Asp-64 acts as the Proton acceptor in catalysis. Substrate is bound by residues Ala-65, 140–143 (FAFD), Lys-163, and 168–169 (HR).

It belongs to the HAM1 NTPase family. In terms of assembly, homodimer. It depends on Mg(2+) as a cofactor.

It carries out the reaction XTP + H2O = XMP + diphosphate + H(+). The catalysed reaction is dITP + H2O = dIMP + diphosphate + H(+). The enzyme catalyses ITP + H2O = IMP + diphosphate + H(+). Functionally, pyrophosphatase that catalyzes the hydrolysis of nucleoside triphosphates to their monophosphate derivatives, with a high preference for the non-canonical purine nucleotides XTP (xanthosine triphosphate), dITP (deoxyinosine triphosphate) and ITP. Seems to function as a house-cleaning enzyme that removes non-canonical purine nucleotides from the nucleotide pool, thus preventing their incorporation into DNA/RNA and avoiding chromosomal lesions. The sequence is that of dITP/XTP pyrophosphatase from Methanothermobacter marburgensis (strain ATCC BAA-927 / DSM 2133 / JCM 14651 / NBRC 100331 / OCM 82 / Marburg) (Methanobacterium thermoautotrophicum).